The following is a 339-amino-acid chain: DNA-directed RNA polymerase subunit alpha (339 aa).

Residues 1–235 (MTIQKNWQEL…DQLNVFVNFE (235 aa)) form an alpha N-terminal domain (alpha-NTD) region. An alpha C-terminal domain (alpha-CTD) region spans residues 251–339 (FNPAFLKKVD…ELAKRFEDHY (89 aa)).

This sequence belongs to the RNA polymerase alpha chain family. As to quaternary structure, homodimer. The RNAP catalytic core consists of 2 alpha, 1 beta, 1 beta' and 1 omega subunit. When a sigma factor is associated with the core the holoenzyme is formed, which can initiate transcription.

The enzyme catalyses RNA(n) + a ribonucleoside 5'-triphosphate = RNA(n+1) + diphosphate. Its function is as follows. DNA-dependent RNA polymerase catalyzes the transcription of DNA into RNA using the four ribonucleoside triphosphates as substrates. The polypeptide is DNA-directed RNA polymerase subunit alpha (Rhodopseudomonas palustris (strain HaA2)).